Reading from the N-terminus, the 771-residue chain is MTQAAFDQASDNGPMTPSGSSFGLFAPAVVLLALISALATFLILMGLTPVVPTHQVVISVLLVNAAAVLILSAMVGREIWRIAKARARGRAAARLHIRIVGLFAVVSVVPAILVAVVASLTLDRGLDRWFSMRTQEIVASSVSVAQTYVREHALNIRGDILAMSADLTRLKSVYEGDRSRFNQILTAQAALRNLPGAMLIRRDLSVVERANVNIGREFIVPANLAIGDATPDQPVIYLPNDADYVAAVVPLKDYDDLYLYVARLIDPRVIGYLKTTQETLADYRSLEERRFGVQVAFALMYAVITLIVLLSAVWLGLNFSKWLVAPIRRLMSAADHVAEGNLDVRVPIYRAEGDLASLAETFNKMTHELRSQREAILTARDQIDSRRRFTEAVLSGVGAGVIGLDSQERITILNRSAERLLGLSEVEALHRHLAEVVPETAGLLEEAEHARQRSVQGNITLTRDGRERVFAVRVTTEQSPEAEHGWVVTLDDITELISAQRTSAWADVARRIAHEIKNPLTPIQLSAERLKRKFGRHVTQDREIFDQCTDTIIRQVGDIGRMVDEFSSFARMPKPVVDSQDMSEIIRQTVFLMRVGHPEVVFDSEVPPAMPARFDRRLVSQALTNILKNAAEAIEAVPPDVRGQGRIRVSANRVGEDLVIDIIDNGTGLPQESRNRLLEPYVTTREKGTGLGLAIVGKIMEEHGGGIELNDAPEGRGAWIRLTLKAEGPKAEPTDASTKATGAATPAAPAASAMARDAAADSAARGKNERT.

The next 4 helical transmembrane spans lie at 22 to 46 (FGLF…ILMG), 56 to 76 (VVIS…AMVG), 99 to 122 (IVGL…SLTL), and 295 to 319 (VAFA…GLNF). The region spanning 321-374 (KWLVAPIRRLMSAADHVAEGNLDVRVPIYRAEGDLASLAETFNKMTHELRSQRE) is the HAMP domain. One can recognise a PAS domain in the interval 386–458 (RRRFTEAVLS…HARQRSVQGN (73 aa)). In terms of domain architecture, Histidine kinase spans 511-728 (RIAHEIKNPL…WIRLTLKAEG (218 aa)). The residue at position 514 (His-514) is a Phosphohistidine; by autocatalysis. A disordered region spans residues 727–771 (EGPKAEPTDASTKATGAATPAAPAASAMARDAAADSAARGKNERT). Low complexity predominate over residues 740-763 (ATGAATPAAPAASAMARDAAADSA).

Its subcellular location is the cell membrane. It catalyses the reaction ATP + protein L-histidine = ADP + protein N-phospho-L-histidine.. In terms of biological role, member of the two-component regulatory system NtrY/NtrX involved in nitrogen level control. Probably activates NtrX by phosphorylation. This is Nitrogen regulation protein NtrY (ntrY) from Azorhizobium caulinodans (strain ATCC 43989 / DSM 5975 / JCM 20966 / LMG 6465 / NBRC 14845 / NCIMB 13405 / ORS 571).